The following is a 214-amino-acid chain: Pyrrolidone-carboxylate peptidase (214 aa).

Active-site residues include Glu78, Cys141, and His165.

The protein belongs to the peptidase C15 family. Homotetramer.

It localises to the cytoplasm. It catalyses the reaction Release of an N-terminal pyroglutamyl group from a polypeptide, the second amino acid generally not being Pro.. In terms of biological role, removes 5-oxoproline from various penultimate amino acid residues except L-proline. The polypeptide is Pyrrolidone-carboxylate peptidase (Streptococcus pneumoniae (strain 70585)).